Here is a 129-residue protein sequence, read N- to C-terminus: Small ribosomal subunit protein uS12 (129 aa).

The residue at position 89 (Asp89) is a 3-methylthioaspartic acid. Positions Arg110–Lys129 are disordered.

It belongs to the universal ribosomal protein uS12 family. Part of the 30S ribosomal subunit. Contacts proteins S8 and S17. May interact with IF1 in the 30S initiation complex.

Functionally, with S4 and S5 plays an important role in translational accuracy. Its function is as follows. Interacts with and stabilizes bases of the 16S rRNA that are involved in tRNA selection in the A site and with the mRNA backbone. Located at the interface of the 30S and 50S subunits, it traverses the body of the 30S subunit contacting proteins on the other side and probably holding the rRNA structure together. The combined cluster of proteins S8, S12 and S17 appears to hold together the shoulder and platform of the 30S subunit. The polypeptide is Small ribosomal subunit protein uS12 (Rickettsia bellii (strain OSU 85-389)).